Here is a 677-residue protein sequence, read N- to C-terminus: Mitochondrial disaggregase (677 aa).

Residues 1 to 28 (MLGSLVSKRTAPAPRLLLQLLRSPSLRS) constitute a mitochondrion transit peptide. An autoinhibitory region spans residues 92–126 (PSPEDTLPGQDSWNGVLSRAGLGVWALATALVVHC). 4 ANK repeats span residues 133-162 (SKDA…DVNA), 166-195 (LGWT…DPNL), 235-265 (KGCT…PLQR), and 268-297 (MGHT…EKQR). Positions 316, 318, 353, 354, 355, 356, 357, 358, 425, and 466 each coordinate ATP. The tract at residues 477-505 (LQLRQEALEMSRNRIAENLGDVQISDKIT) is regulatory; slows ATPase and disaggregase activities. Arg531 serves as a coordination point for ATP. N6-acetyllysine is present on Lys559. Arg590 is a binding site for ATP.

This sequence belongs to the ClpA/ClpB family. In terms of assembly, homododecamer when substrate-bound; the homododecamer consists of 2 homohexamers stacked head-to-head via ANK repeat-mediated interactions. The active substrate-bound form is likely to exist in a dynamic equilibrium between homohexamers and homododecamers. Homotetradecamer in the unbound state which is remodeled upon substrate binding into the homododecamer. Interacts with PHB and PHB2. Interacts with MAVS; the interaction is enhanced by Sendai virus infection. Proteolytically cleaved by protease PARL. ATP-dependent protein disaggregase activity is stimulated by PARL-mediated cleavage of the N-terminal autoinhibitory peptide.

It localises to the mitochondrion intermembrane space. The enzyme catalyses ATP + H2O = ADP + phosphate + H(+). Disaggregase activity is inhibited by ADP. Its function is as follows. Functions as a regulatory ATPase and participates in secretion/protein trafficking process. Has ATP-dependent protein disaggregase activity and is required to maintain the solubility of key mitochondrial proteins. Involved in mitochondrial-mediated antiviral innate immunity, activates RIG-I-mediated signal transduction and production of IFNB1 and pro-inflammatory cytokine IL6. Plays a role in granulocyte differentiation. This is Mitochondrial disaggregase from Bos taurus (Bovine).